The chain runs to 413 residues: Type IV pilus assembly protein TapC (413 aa).

4 helical membrane-spanning segments follow: residues 180–200 (YPAM…LFVI), 227–247 (FMQH…FLYV), 286–306 (LSTT…AAGA), and 386–406 (IMVV…LPIF).

It belongs to the GSP F family.

The protein resides in the cell inner membrane. Its function is as follows. Involved in the translocation of the type IV pilin. The polypeptide is Type IV pilus assembly protein TapC (tapC) (Aeromonas hydrophila).